The chain runs to 493 residues: Probable malate:quinone oxidoreductase (493 aa).

The protein belongs to the MQO family. FAD serves as cofactor.

It carries out the reaction (S)-malate + a quinone = a quinol + oxaloacetate. Its pathway is carbohydrate metabolism; tricarboxylic acid cycle; oxaloacetate from (S)-malate (quinone route): step 1/1. This is Probable malate:quinone oxidoreductase from Lysinibacillus sphaericus (strain C3-41).